The primary structure comprises 190 residues: Small ribosomal subunit protein eS7 (190 aa).

The protein belongs to the eukaryotic ribosomal protein eS7 family. As to quaternary structure, component of the small ribosomal subunit. Part of the small subunit (SSU) processome, composed of more than 70 proteins and the RNA chaperone small nucleolar RNA (snoRNA) U3.

Its subcellular location is the cytoplasm. The protein localises to the cytoskeleton. It localises to the microtubule organizing center. The protein resides in the centrosome. It is found in the nucleus. Its subcellular location is the nucleolus. Functionally, component of the small ribosomal subunit. The ribosome is a large ribonucleoprotein complex responsible for the synthesis of proteins in the cell. Required for rRNA maturation. Part of the small subunit (SSU) processome, first precursor of the small eukaryotic ribosomal subunit. During the assembly of the SSU processome in the nucleolus, many ribosome biogenesis factors, an RNA chaperone and ribosomal proteins associate with the nascent pre-rRNA and work in concert to generate RNA folding, modifications, rearrangements and cleavage as well as targeted degradation of pre-ribosomal RNA by the RNA exosome. The chain is Small ribosomal subunit protein eS7 (RpS7) from Spodoptera frugiperda (Fall armyworm).